Consider the following 158-residue polypeptide: SsrA-binding protein (158 aa).

Belongs to the SmpB family.

Its subcellular location is the cytoplasm. Required for rescue of stalled ribosomes mediated by trans-translation. Binds to transfer-messenger RNA (tmRNA), required for stable association of tmRNA with ribosomes. tmRNA and SmpB together mimic tRNA shape, replacing the anticodon stem-loop with SmpB. tmRNA is encoded by the ssrA gene; the 2 termini fold to resemble tRNA(Ala) and it encodes a 'tag peptide', a short internal open reading frame. During trans-translation Ala-aminoacylated tmRNA acts like a tRNA, entering the A-site of stalled ribosomes, displacing the stalled mRNA. The ribosome then switches to translate the ORF on the tmRNA; the nascent peptide is terminated with the 'tag peptide' encoded by the tmRNA and targeted for degradation. The ribosome is freed to recommence translation, which seems to be the essential function of trans-translation. This Caldicellulosiruptor bescii (strain ATCC BAA-1888 / DSM 6725 / KCTC 15123 / Z-1320) (Anaerocellum thermophilum) protein is SsrA-binding protein.